The primary structure comprises 380 residues: ATPase ASNA1 homolog (380 aa).

48-55 (KGGVGKTT) is an ATP binding site. D77 is an active-site residue. Residues E248 and N275 each coordinate ATP.

It belongs to the arsA ATPase family. As to quaternary structure, homodimer.

The protein resides in the cytoplasm. It localises to the endoplasmic reticulum. ATPase required for the post-translational delivery of tail-anchored (TA) proteins to the endoplasmic reticulum. Recognizes and selectively binds the transmembrane domain of TA proteins in the cytosol. This complex then targets to the endoplasmic reticulum by membrane-bound receptors, where the tail-anchored protein is released for insertion. This process is regulated by ATP binding and hydrolysis. ATP binding drives the homodimer towards the closed dimer state, facilitating recognition of newly synthesized TA membrane proteins. ATP hydrolysis is required for insertion. Subsequently, the homodimer reverts towards the open dimer state, lowering its affinity for the membrane-bound receptor, and returning it to the cytosol to initiate a new round of targeting. In Plasmodium chabaudi chabaudi, this protein is ATPase ASNA1 homolog.